We begin with the raw amino-acid sequence, 103 residues long: Floral defensin-like protein 1 (103 aa).

Residues 1–25 (MARSICFFAVAILALMLFAAYDAEA) form the signal peptide. 5 disulfide bridges follow: C28-C72, C32-C48, C39-C59, C45-C66, and C49-C68. The propeptide at 73 to 103 (VFEKTEATQTETFTKDVNTLAEALLEADMMV) is removed in mature form.

Belongs to the DEFL family. Post-translationally, when compared to other plant defensins, the petunia defensins have an additional fifth disulfide bond. As to expression, petals.

The protein localises to the secreted. The protein resides in the vacuole. In terms of biological role, plant defense peptide with antifungal activity against F.oxysporum and B.cinerea. In Petunia hybrida (Petunia), this protein is Floral defensin-like protein 1 (D1).